A 198-amino-acid chain; its full sequence is Auxin-binding protein 1 (198 aa).

Residues 1 to 33 (MIVLSVGSASSSPIVVVFSVALLLFYFSETSLG) form the signal peptide. Residues cysteine 36 and cysteine 189 are joined by a disulfide bond. Residues histidine 92, histidine 94, and glutamate 98 each contribute to the Zn(2+) site. N-linked (GlcNAc...) asparagine glycosylation occurs at asparagine 130. Histidine 141 serves as a coordination point for Zn(2+). The short motif at 195 to 198 (KDEL) is the Prevents secretion from ER element.

In terms of assembly, homodimer. May interact with the GPI-anchored plasma membrane protein SKU5 and its family members. Interacts with TMK1 (via extracellular domain). In terms of processing, glycosylated. Ubiquitinated by RMA2, leading to proteasomal degradation.

It localises to the endoplasmic reticulum lumen. The protein resides in the cell membrane. In terms of biological role, auxin receptor that controls cell elongation and cell division. Involved in embryonic morphogenesis. Acts on the cell cycle, endocycle, cell plate formation, and cell expansion and contributes to the control of auxin-related gene expression. Controls root meristem size and mediates auxin responsiveness. Involved in activation of ROP GTPases in response to auxin and regulation of clathrin-mediated endocytosis in roots. Acts as a positive factor in clathrin recruitment to the plasma membrane, thereby promoting endocytosis. Upon auxin binding, restricts the internalization of PIN proteins by inhibiting clathrin-mediated endocytosis. Promotes auxin-triggered phosphorylation status modulation of RAF-like kinases (e.g. RAF20 and RAF24). Involved in the regulation of polar auxin transport. Behaves as a negative regulator of the SCF(TIR1/AFB) signaling pathway, protecting AUX/IAA repressors from degradation. Regulates the expression of cell wall remodeling genes via an SCF(TIR1/AFB)-dependent pathway. Involved in the modulation of hemicellulose xyloglucan structure. Required for rapid auxin-mediated re-orientation of microtubules to regulate cell elongation in roots and dark-grown hypocotyls as well as asymmetric growth during gravitropic responses. Involved in the shade avoidance response. Forms with TMK1 a cell surface auxin perception complex that activates ROP signaling pathways. ABP1 sensing of auxin is important for the ABP1-TMK1 complex formation. Interacts functionally with phytochrome to regulate growth. The sequence is that of Auxin-binding protein 1 from Arabidopsis thaliana (Mouse-ear cress).